A 296-amino-acid chain; its full sequence is Nucleotide-binding protein SPT_1506 (296 aa).

13 to 20 (GMSGAGKT) contacts ATP. 63-66 (DMRS) provides a ligand contact to GTP.

Belongs to the RapZ-like family.

In terms of biological role, displays ATPase and GTPase activities. This chain is Nucleotide-binding protein SPT_1506, found in Streptococcus pneumoniae (strain Taiwan19F-14).